A 165-amino-acid chain; its full sequence is MPSTFSGDETAPFFGFLGAAAALVFSCMGAAYGTAKSGVGVASMGVMRPELVMKSIVPVVMAGVLGIYGLIIAVIISTGINPKTKSYYLFDGYAHLSSGLACGLAGLSAGMAIGIVGDAGVRANAQQPKLFVGMILILIFAEALALYGLIVGIILSSRAGQSRAE.

The Lumenal segment spans residues 1–10 (MPSTFSGDET). Residues 11-33 (APFFGFLGAAAALVFSCMGAAYG) form a helical membrane-spanning segment. Residues 34-55 (TAKSGVGVASMGVMRPELVMKS) are Cytoplasmic-facing. A helical transmembrane segment spans residues 56-76 (IVPVVMAGVLGIYGLIIAVII). Residues 77-95 (STGINPKTKSYYLFDGYAH) lie on the Lumenal side of the membrane. Residues 96-117 (LSSGLACGLAGLSAGMAIGIVG) form a helical membrane-spanning segment. Residues 118–129 (DAGVRANAQQPK) lie on the Cytoplasmic side of the membrane. The chain crosses the membrane as a helical span at residues 130-155 (LFVGMILILIFAEALALYGLIVGIIL). The Lumenal portion of the chain corresponds to 156-165 (SSRAGQSRAE).

The protein belongs to the V-ATPase proteolipid subunit family. In terms of assembly, V-ATPase is a heteromultimeric enzyme composed of a peripheral catalytic V1 complex (main components: subunits A, B, C, D, E, and F) attached to an integral membrane V0 proton pore complex (main component: the proteolipid protein; which is present as a hexamer that forms the proton-conducting pore).

Its subcellular location is the vacuole membrane. Its function is as follows. Proton-conducting pore forming subunit of the membrane integral V0 complex of vacuolar ATPase. V-ATPase is responsible for acidifying a variety of intracellular compartments in eukaryotic cells. The sequence is that of V-type proton ATPase 16 kDa proteolipid subunit from Nicotiana tabacum (Common tobacco).